We begin with the raw amino-acid sequence, 623 residues long: Putative ABC transporter ATP-binding protein MG014 (623 aa).

Residues 16 to 325 (LILAPFFTFA…YIVLGFILTS (310 aa)) enclose the ABC transmembrane type-1 domain. The next 6 helical transmembrane spans lie at 27-47 (IVID…VFSI), 81-101 (VLAT…LISI), 157-177 (FLRL…FAVT), 181-201 (DMSI…GILN), 266-286 (NIPF…LLVF), and 307-327 (IFAF…TSLT). Residues 365 to 611 (LEFRNISFGL…CSLYQKMKES (247 aa)) enclose the ABC transporter domain. 400–407 (GPTGSGKS) is a binding site for ATP.

It belongs to the ABC transporter superfamily.

The protein resides in the cell membrane. The chain is Putative ABC transporter ATP-binding protein MG014 from Mycoplasma genitalium (strain ATCC 33530 / DSM 19775 / NCTC 10195 / G37) (Mycoplasmoides genitalium).